The chain runs to 145 residues: Large ribosomal subunit protein bL17 (145 aa).

This sequence belongs to the bacterial ribosomal protein bL17 family. In terms of assembly, part of the 50S ribosomal subunit. Contacts protein L32.

The polypeptide is Large ribosomal subunit protein bL17 (Orientia tsutsugamushi (strain Ikeda) (Rickettsia tsutsugamushi)).